The following is a 440-amino-acid chain: Murein DD-endopeptidase MepM (440 aa).

Residues 21–40 (VMLGSLTVLTLAVAVWRPYV) traverse the membrane as a helical segment. The region spanning 96–141 (HEYVVSTGDTLSSILNQYGIDMGDITQLAAADKELRNLKIGQQLSW) is the LysM domain. His-314 contacts Zn(2+).

It belongs to the peptidase M23B family. It depends on Zn(2+) as a cofactor.

It is found in the cell membrane. It functions in the pathway cell wall biogenesis; cell wall polysaccharide biosynthesis. Functionally, a murein DD-endopeptidase with specificity for D-Ala-meso-diaminopimelic acid (mDAP) cross-links. Its role is probably to cleave D-Ala-mDAP cross-links to allow insertion of new glycans and thus cell wall expansion. Functionally redundant with MepM and MepH. This chain is Murein DD-endopeptidase MepM (mepM), found in Escherichia coli O6:H1 (strain CFT073 / ATCC 700928 / UPEC).